We begin with the raw amino-acid sequence, 496 residues long: PE-PGRS family protein PE_PGRS1 (496 aa).

The PE domain maps to leucine 4–asparagine 94. The interval leucine 461–glycine 480 is disordered.

The protein belongs to the mycobacterial PE family. PGRS subfamily.

Its subcellular location is the secreted. It localises to the cell wall. The protein localises to the host mitochondrion. Functionally, when expressed in host mitochondria, induces mitochondrial stress which results in mitochondrial membrane depolarization, up-regulation of mitochondrial superoxides and release of cytochrome-C in the cytoplasm. The cytochrome-C in cytoplasm triggers the activation of caspase-9, caspase-3 and caspase-7, leading to the apoptosis of host macrophages. Being a late expressing protein, apoptosis induction by PE_PGRS1 may facilitate the M.tuberculosis survival and silent expansion of its niche at the site of granuloma. Its function is as follows. When expressed in THP-1 macrophages, promotes the survival of mycobacteria within macrophages after a 24- to 48-hour infection by blocking endoplasmic reticulum stress and inhibiting host cell apoptosis. Can chelate excessive intracellular calcium in THP-1 macrophages, which reduces the concentration of intracellular free Ca(2+) and blocks the PERK-eIF2alpha-ATF4 axis, thereby inhibiting the endoplasmic reticulum stress caused by infection. It also reduces the apoptosis of THP-1 macrophages by decreasing the activation of caspase-3 and caspase-9. The chain is PE-PGRS family protein PE_PGRS1 from Mycobacterium tuberculosis (strain ATCC 25618 / H37Rv).